A 198-amino-acid chain; its full sequence is Synaptobrevin homolog YKT6 (198 aa).

Positions 8–126 (VLYKGEAKVV…TIHYPALDGH (119 aa)) constitute a Longin domain. In terms of domain architecture, v-SNARE coiled-coil homology spans 138 to 198 (PMTKVQAELD…RKQNSCCAIM (61 aa)). A Phosphoserine modification is found at serine 159. The S-palmitoyl cysteine moiety is linked to residue cysteine 194. A Cysteine methyl ester modification is found at cysteine 195. Cysteine 195 carries S-farnesyl cysteine lipidation. Residues 196–198 (AIM) constitute a propeptide, removed in mature form.

The protein belongs to the synaptobrevin family. As to quaternary structure, identified in 2 different SNARE complexes; the first one composed of GOSR1, GOSR2 and STX5 and the second one composed of BET1L, GOSR1 and STX5. Palmitoylated; catalyzes its own palmitoylation. Palmitoylation is required for Golgi targeting. Post-translationally, farnesylation is required for Golgi targeting.

It is found in the cytoplasm. Its subcellular location is the cytosol. The protein localises to the cytoplasmic vesicle membrane. It localises to the golgi apparatus membrane. Vesicular soluble NSF attachment protein receptor (v-SNARE) mediating vesicle docking and fusion to a specific acceptor cellular compartment. Functions in endoplasmic reticulum to Golgi transport; as part of a SNARE complex composed of GOSR1, GOSR2 and STX5. Functions in early/recycling endosome to TGN transport; as part of a SNARE complex composed of BET1L, GOSR1 and STX5. Has a S-palmitoyl transferase activity. The polypeptide is Synaptobrevin homolog YKT6 (YKT6) (Homo sapiens (Human)).